Here is a 177-residue protein sequence, read N- to C-terminus: Anti-apoptotic protein NR13 (177 aa).

The short motif at 75–94 (LEAEGGLNWGRLLALVVFTG) is the BH1 element. Residues 86-106 (LLALVVFTGTLAAALAESGCE) form a helical membrane-spanning segment. The short motif at 126-141 (EWLEEHGGWDGFCRFF) is the BH2 element. Residues 156–176 (SNAIMAAAGFGIAGLAFLLVV) traverse the membrane as a helical segment.

Belongs to the Bcl-2 family. As to quaternary structure, interacts with BAX. In terms of tissue distribution, expressed preferentially in heart, skeletal muscle, retina, optical tectum and bursa of Fabricius.

Its subcellular location is the cell membrane. Its function is as follows. Shows anti-apoptotic properties. Counteract the pro-apoptotic activity of BAX. The polypeptide is Anti-apoptotic protein NR13 (NR13) (Gallus gallus (Chicken)).